The primary structure comprises 264 residues: ATP synthase subunit a (264 aa).

5 consecutive transmembrane segments (helical) span residues 39–59 (LDTL…FYIV), 97–117 (VAPL…MDLV), 139–159 (TADP…VIFY), 205–225 (LFGN…LPWW), and 239–259 (LLVI…YISL).

The protein belongs to the ATPase A chain family. In terms of assembly, F-type ATPases have 2 components, CF(1) - the catalytic core - and CF(0) - the membrane proton channel. CF(1) has five subunits: alpha(3), beta(3), gamma(1), delta(1), epsilon(1). CF(0) has three main subunits: a(1), b(2) and c(9-12). The alpha and beta chains form an alternating ring which encloses part of the gamma chain. CF(1) is attached to CF(0) by a central stalk formed by the gamma and epsilon chains, while a peripheral stalk is formed by the delta and b chains.

The protein resides in the cell inner membrane. Key component of the proton channel; it plays a direct role in the translocation of protons across the membrane. In Coxiella burnetii (strain Dugway 5J108-111), this protein is ATP synthase subunit a.